The sequence spans 449 residues: Capsid protein (449 aa).

Residues 1–43 (MARRARRPRGRFYAFRRGRWHNLKRLRRRYKFRHRRRQRYRRR) form a DNA-binding region. Residues 6–47 (RRPRGRFYAFRRGRWHNLKRLRRRYKFRHRRRQRYRRRAFRK) form a nuclear localization signals region.

It belongs to the gyrovirus capsid protein family. In terms of assembly, homomultimer (Potential). Interacts with Rep; this interaction relocates Rep into the nucleus.

It localises to the host nucleus. Its subcellular location is the virion. Self-assembles to form the virion icosahedral capsid with a T=1 symmetry. This very small capsid (25 nm in diameter) allows the virus to be very stable in the environment and resistant to some disinfectants, including detergents. Essential for the initial attachment to host receptors. After attachment, the virus is endocytosed and traffics to the nucleus. The capsid protein binds and transports the viral genome and Rep across the nuclear envelope. This is Capsid protein (VP1) from Chicken anemia virus (isolate USA CIA-1) (CAV).